We begin with the raw amino-acid sequence, 1193 residues long: Dynamin-like protein A (1193 aa).

Positions 1–609 are D1, associates with and fuses membranes, tethers lipsomes; the sequence is MTDQNRKELL…AFRERVKRLE (609 aa). The tract at residues 50–57 is G1 motif D1; it reads GHYSAGKS. Residues 76–78 form a G2 motif D1 region; that stretch reads TSA. Positions 141–144 are G3 motif D1; it reads DTPG. Residues 199–202 form a G4 motif D1 region; sequence NQID. The segment at 561–1193 is D2, does not associate with membranes; that stretch reads MPKSEIKMEQ…WKNSDNTIKM (633 aa). The interval 619 to 626 is G1 motif D2; the sequence is GGFSSGKS. The tract at residues 645–647 is G2 motif D2; that stretch reads TTA. Residues 774-777 form a G3 motif D2 region; that stretch reads DTPG. The tract at residues 837 to 840 is G4 motif D2; it reads NAAD.

This sequence belongs to the TRAFAC class dynamin-like GTPase superfamily. Dynamin/Fzo/YdjA family. Homodimer in solution. Both D1 and D2 domains interact with YwpG, YneK interacts only with D1 while RNase Y (rny) only interacts with whole protein. Probably oligomerizes at damaged membrane sites. Mg(2+) is required as a cofactor.

The protein localises to the cell membrane. The catalysed reaction is GTP + H2O = GDP + phosphate + H(+). In terms of biological role, mediates lipid mixing of vesicles and full mixing of their contents in the absence and presence of GTP. Tethers and mixes small vesicles better than larger ones, indicating a curvature preference. GTP slows down DynA-mediated lipid fusion, perhaps controlling its activity. Prefers phospholipid composition close to the B.subtilis membrane; requires phosphatidylglycerol for fusion has no activity on pure phosphatidylethanolamine vesicles. Regulates membrane lipid diffusion. Required to prevent membrane damage when exposed to low levels of membrane-damaging antibiotics or to bacteriophage. Probably surveys the cell membrane for stress; localizes to sites of membrane damage (treatment with nisin) and forms foci in cells treated with pore-forming compounds (CCCP). May assist membrane repair, possibly by membrane tethering and fusion. Probably functions both in early and late cell division, affects the proper formation of the FtsZ ring. Plays a non-redundant role with flottilin (floT) in membrane dynamics and cell shape. Probably able to bend membranes. Tethers liposomes and mediates their fusion; this does not require GTPase activity or the presence of GTP. Both GTPase domains (dynamin-type G) are required for GTPase activity. Its function is as follows. Has intrinsic affinity for membranes and membrane distortion capability; causes tubulation and membrane distortion when expressed in a Drosophila cell line. This chain is Dynamin-like protein A, found in Bacillus subtilis (strain 168).